The primary structure comprises 180 residues: uncharacterized protein (180 aa).

The stretch at 3 to 33 (QQQSNNSNDNKEQLDRVIESLNRVNSETKQI) forms a coiled coil.

This is an uncharacterized protein from Acanthamoeba polyphaga (Amoeba).